Here is a 251-residue protein sequence, read N- to C-terminus: Probable transcriptional regulatory protein cgR_1708 (251 aa).

The segment at 1-22 is disordered; that stretch reads MAGHSKWATTKHKKAANDAKRG.

The protein belongs to the TACO1 family.

The protein resides in the cytoplasm. This chain is Probable transcriptional regulatory protein cgR_1708, found in Corynebacterium glutamicum (strain R).